A 321-amino-acid polypeptide reads, in one-letter code: Acetylglutamate kinase (321 aa).

Residues 88–89 (GG), arginine 110, and asparagine 216 each bind substrate.

The protein belongs to the acetylglutamate kinase family. ArgB subfamily.

It is found in the cytoplasm. The enzyme catalyses N-acetyl-L-glutamate + ATP = N-acetyl-L-glutamyl 5-phosphate + ADP. It participates in amino-acid biosynthesis; L-arginine biosynthesis; N(2)-acetyl-L-ornithine from L-glutamate: step 2/4. Catalyzes the ATP-dependent phosphorylation of N-acetyl-L-glutamate. This chain is Acetylglutamate kinase, found in Ehrlichia chaffeensis (strain ATCC CRL-10679 / Arkansas).